Here is a 456-residue protein sequence, read N- to C-terminus: Dihydroorotase (456 aa).

Zn(2+) contacts are provided by H60 and H62. Residues 62–64 (HFR) and N94 contribute to the substrate site. The Zn(2+) site is built by E146, H180, H234, and D313. The active site involves D313. H317 is a substrate binding site.

This sequence belongs to the metallo-dependent hydrolases superfamily. DHOase family. Class I DHOase subfamily. It depends on Zn(2+) as a cofactor.

The catalysed reaction is (S)-dihydroorotate + H2O = N-carbamoyl-L-aspartate + H(+). It functions in the pathway pyrimidine metabolism; UMP biosynthesis via de novo pathway; (S)-dihydroorotate from bicarbonate: step 3/3. Catalyzes the reversible cyclization of carbamoyl aspartate to dihydroorotate. The chain is Dihydroorotase from Methanosarcina mazei (strain ATCC BAA-159 / DSM 3647 / Goe1 / Go1 / JCM 11833 / OCM 88) (Methanosarcina frisia).